The chain runs to 419 residues: MEVENGEGQVQVHLKTKQEQYAVPDVPYAIEGSVSTTELNIFLNALLQNKGAESVDFDFLVFDEYLRGRLCDHLREKAISFEDSIEIEYVERFPAPEPQDCLLHDDWVSAVKASGKWILTGCYDNTLNIWTYKGKHKLTIPGHTAPIKAVDWISLDNENGRFVSTSQDQTAMMWQWNIASNAVECVSVCKGHERGVDSVCVSPDAQRFATGSWDTMLKIWSAELEDAGESTAKRAKESGVRTPRMTLQGHRESISAVQWMDNNTLLTGSWDHTLKVWDLNLEGIKTEISTNKSIFDASHSKLNNLIVTASADKNLRLYDARTNQGSVVRSTYLGHNAWVQTVMWSITEEFLFVSGAYDNQNKLWDCRSPKAPLYDLLGHGEKVLDIDWSNPKYIVSGGADNTVRVFKSSKATVENMETK.

The tract at residues 10 to 91 (VQVHLKTKQE…EDSIEIEYVE (82 aa)) is ubiquitin-like (UBL) domain. 7 WD repeats span residues 103 to 140 (LHDDWVSAVKASGKWILTGCYDNTLNIWTYKGKHKLTI), 142 to 184 (GHTA…NAVE), 191 to 230 (GHERGVDSVCVSPDAQRFATGSWDTMLKIWSAELEDAGES), 249 to 287 (GHRESISAVQWMDNNTLLTGSWDHTLKVWDLNLEGIKTE), 289 to 328 (STNKSIFDASHSKLNNLIVTASADKNLRLYDARTNQGSVV), 334 to 374 (GHNA…APLY), and 378 to 416 (GHGEKVLDIDWSNPKYIVSGGADNTVRVFKSSKATVENM).

It belongs to the WD repeat WDR12/YTM1 family.

Its subcellular location is the nucleus. It is found in the nucleolus. The protein resides in the nucleoplasm. Required for maturation of ribosomal RNAs and formation of the large ribosomal subunit. The sequence is that of Ribosome biogenesis protein WDR12 homolog from Drosophila mojavensis (Fruit fly).